The primary structure comprises 147 residues: 3-dehydroquinate dehydratase 1 (147 aa).

Tyrosine 23 serves as the catalytic Proton acceptor. Positions 75, 81, and 88 each coordinate substrate. Catalysis depends on histidine 101, which acts as the Proton donor. Substrate-binding positions include 102 to 103 (LS) and arginine 112.

It belongs to the type-II 3-dehydroquinase family. In terms of assembly, homododecamer.

The catalysed reaction is 3-dehydroquinate = 3-dehydroshikimate + H2O. The protein operates within metabolic intermediate biosynthesis; chorismate biosynthesis; chorismate from D-erythrose 4-phosphate and phosphoenolpyruvate: step 3/7. In terms of biological role, catalyzes a trans-dehydration via an enolate intermediate. The polypeptide is 3-dehydroquinate dehydratase 1 (aroQ1) (Pseudomonas aeruginosa (strain ATCC 15692 / DSM 22644 / CIP 104116 / JCM 14847 / LMG 12228 / 1C / PRS 101 / PAO1)).